The chain runs to 211 residues: Thymidylate kinase (211 aa).

11–18 is an ATP binding site; it reads GPDGAGKT.

This sequence belongs to the thymidylate kinase family.

The catalysed reaction is dTMP + ATP = dTDP + ADP. Phosphorylation of dTMP to form dTDP in both de novo and salvage pathways of dTTP synthesis. The sequence is that of Thymidylate kinase from Streptococcus agalactiae serotype Ia (strain ATCC 27591 / A909 / CDC SS700).